Reading from the N-terminus, the 847-residue chain is B-cell receptor CD22 (847 aa).

The first 19 residues, 1–19 (MHLLGPWLLLLVLEYLAFS), serve as a signal peptide directing secretion. Residues 20–138 (DSSKWAFEHP…MERIHLNVSE (119 aa)) enclose the Ig-like V-type domain. The Extracellular segment spans residues 20–687 (DSSKWAFEHP…YYSPETIGRR (668 aa)). 3 N-linked (GlcNAc...) asparagine glycosylation sites follow: Asn67, Asn101, and Asn112. Position 120 (Arg120) interacts with N-acetylneuraminate. N-linked (GlcNAc...) asparagine glycans are attached at residues Asn135, Asn164, and Asn231. Ig-like C2-type domains follow at residues 143–235 (PHIQ…DTVQ), 242–326 (PKLE…VFLQ), 331–416 (PEPS…LDVQ), 419–500 (PKKV…VALN), 505–582 (PRDV…QTAS), and 593–676 (PRRL…STLT). Cys161 and Cys219 form a disulfide bridge. Intrachain disulfides connect Cys265/Cys309 and Cys353/Cys396. N-linked (GlcNAc...) asparagine glycans are attached at residues Asn363, Asn428, Asn445, Asn448, and Asn479. 2 disulfide bridges follow: Cys442–Cys484 and Cys529–Cys571. N-linked (GlcNAc...) asparagine glycans are attached at residues Asn574 and Asn634. A disulfide bridge connects residues Cys616 and Cys659. A helical transmembrane segment spans residues 688-708 (VAVGFGSCLAILILAICGLKL). Residues 709–847 (QRRWKRTQSQ…ENVDYVILKH (139 aa)) lie on the Cytoplasmic side of the membrane. A phosphoserine mark is found at Ser725, Ser726, and Ser729. Short sequence motifs (ITIM motif) lie at residues 760 to 765 (ISYTTL) and 794 to 799 (VTYSVL). Tyr762 carries the post-translational modification Phosphotyrosine. Residues Tyr807, Tyr822, and Tyr842 each carry the phosphotyrosine modification. Short sequence motifs (ITIM motif) lie at residues 820–825 (IHYSEL) and 840–845 (VDYVIL).

It belongs to the immunoglobulin superfamily. SIGLEC (sialic acid binding Ig-like lectin) family. Predominantly monomer of isoform CD22-beta. Also found as heterodimer of isoform CD22-beta and a shorter isoform. Interacts with PTPN6/SHP-1, LYN, SYK, PIK3R1/PIK3R2 and PLCG1 upon phosphorylation. Interacts with GRB2, INPP5D and SHC1 upon phosphorylation. May form a complex with INPP5D/SHIP, GRB2 and SHC1. Phosphorylation of Tyr-762, Tyr-807 and Tyr-822 are involved in binding to SYK, GRB2 and SYK, respectively. Phosphorylation of Tyr-842 is involved in binding to SYK, PLCG2 and PIK3R1/PIK3R2. Post-translationally, phosphorylated on tyrosine residues by LYN.

The protein resides in the cell membrane. Most highly expressed siglec (sialic acid-binding immunoglobulin-like lectin) on B-cells that plays a role in various aspects of B-cell biology including differentiation, antigen presentation, and trafficking to bone marrow. Binds to alpha 2,6-linked sialic acid residues of surface molecules such as CD22 itself, CD45 and IgM in a cis configuration. Can also bind to ligands on other cells as an adhesion molecule in a trans configuration. Acts as an inhibitory coreceptor on the surface of B-cells and inhibits B-cell receptor induced signaling, characterized by inhibition of the calcium mobilization and cellular activation. Mechanistically, the immunoreceptor tyrosine-based inhibitory motif domain is phosphorylated by the Src kinase LYN, which in turn leads to the recruitment of the protein tyrosine phosphatase 1/PTPN6, leading to the negative regulation of BCR signaling. If this negative signaling from is of sufficient strength, apoptosis of the B-cell can be induced. This chain is B-cell receptor CD22, found in Pan paniscus (Pygmy chimpanzee).